Reading from the N-terminus, the 647-residue chain is Zinc finger protein 567 (647 aa).

The 46-residue stretch at 32-77 (MDVMLENYCHLISVGCHMTKPDVILKLERGEEPWTSFKGHTCLEEN) folds into the KRAB domain. Residues Lys173, Lys202, and Lys217 each participate in a glycyl lysine isopeptide (Lys-Gly) (interchain with G-Cter in SUMO2) cross-link. The C2H2-type 1; degenerate zinc finger occupies 210–232 (FEYNDCEKAFLKRGGPVTHSRTY). C2H2-type zinc fingers lie at residues 253–275 (HTCT…QGIH), 281–303 (YQCH…QRTH), 309–331 (FVCN…QRTH), 337–359 (YECP…QRTH), 365–387 (YECS…QRIH), 393–415 (YICK…QRTH), and 421–443 (YICN…EKTH). Lys447 is covalently cross-linked (Glycyl lysine isopeptide (Lys-Gly) (interchain with G-Cter in SUMO2)). 7 C2H2-type zinc fingers span residues 449–471 (YICN…QRTH), 477–499 (YECP…HRTH), 505–527 (YECN…QRIH), 533–555 (YICN…QKIH), 561–583 (YECP…QRTH), 589–611 (YKCS…QRTH), and 617–639 (YICN…QRTH).

This sequence belongs to the krueppel C2H2-type zinc-finger protein family.

Its subcellular location is the nucleus. Functionally, may be involved in transcriptional regulation. The sequence is that of Zinc finger protein 567 (ZNF567) from Bos taurus (Bovine).